The sequence spans 509 residues: DNA nucleotidylexotransferase (509 aa).

The disordered stretch occupies residues 1–24 (MDPPRASHLSPRKKRPRQTGALMA). Residues 11–17 (PRKKRPR) carry the Nuclear localization signal motif. In terms of domain architecture, BRCT spans 27-124 (PQDIKFQDLV…KPVEMTGKHQ (98 aa)). The residue at position 134 (serine 134) is a Phosphoserine. The segment at 151-509 (SQYACQRRTT…DYIEPWERNA (359 aa)) is mediates interaction with DNTTIP2. The segment at 258–262 (VGLKT) is involved in DNA binding. Residues 333–338 (GFRRGK) and 342–345 (HDVD) contribute to the a 2'-deoxyribonucleoside 5'-triphosphate site. Mg(2+)-binding residues include aspartate 343, aspartate 345, and aspartate 433. 448–449 (GW) lines the a 2'-deoxyribonucleoside 5'-triphosphate pocket.

The protein belongs to the DNA polymerase type-X family. In terms of assembly, interacts with PRP19 and DNTTIP1. Forms a ternary complex with DNTTIP2 and core histone. Released from this complex by PCNA. Interacts with TRERF1. Mg(2+) serves as cofactor.

The protein resides in the nucleus. The enzyme catalyses DNA(n) + a 2'-deoxyribonucleoside 5'-triphosphate = DNA(n+1) + diphosphate. Its function is as follows. Template-independent DNA polymerase which catalyzes the random addition of deoxynucleoside 5'-triphosphate to the 3'-end of a DNA initiator. One of the in vivo functions of this enzyme is the addition of nucleotides at the junction (N region) of rearranged Ig heavy chain and T-cell receptor gene segments during the maturation of B- and T-cells. The polypeptide is DNA nucleotidylexotransferase (DNTT) (Homo sapiens (Human)).